The primary structure comprises 617 residues: 1-deoxy-D-xylulose-5-phosphate synthase (617 aa).

Thiamine diphosphate is bound by residues His76 and 117-119; that span reads GHS. A Mg(2+)-binding site is contributed by Asp148. Residues 149-150, Asn177, Tyr285, and Glu366 each bind thiamine diphosphate; that span reads GA. Position 177 (Asn177) interacts with Mg(2+).

Belongs to the transketolase family. DXPS subfamily. In terms of assembly, homodimer. It depends on Mg(2+) as a cofactor. The cofactor is thiamine diphosphate.

It catalyses the reaction D-glyceraldehyde 3-phosphate + pyruvate + H(+) = 1-deoxy-D-xylulose 5-phosphate + CO2. It functions in the pathway metabolic intermediate biosynthesis; 1-deoxy-D-xylulose 5-phosphate biosynthesis; 1-deoxy-D-xylulose 5-phosphate from D-glyceraldehyde 3-phosphate and pyruvate: step 1/1. Catalyzes the acyloin condensation reaction between C atoms 2 and 3 of pyruvate and glyceraldehyde 3-phosphate to yield 1-deoxy-D-xylulose-5-phosphate (DXP). The polypeptide is 1-deoxy-D-xylulose-5-phosphate synthase (Histophilus somni (strain 2336) (Haemophilus somnus)).